A 1240-amino-acid polypeptide reads, in one-letter code: Phospholipid-transporting ATPase 6 (1240 aa).

At 1–75 (MARRRIRSRI…TTRYNLLTFL (75 aa)) the chain is on the cytoplasmic side. The chain crosses the membrane as a helical span at residues 76-97 (PKCLYEQFHRVANFYFLVAAIL). The Extracellular segment spans residues 98-101 (SVFP). A helical transmembrane segment spans residues 102-124 (LSPFNKWSMIAPLVFVVGLSMGK). At 125–306 (EALEDWRRFM…SRIEKRMDYI (182 aa)) the chain is on the cytoplasmic side. A helical membrane pass occupies residues 307 to 328 (IYTLFALLLTVSFISSLGFAVM). The Extracellular portion of the chain corresponds to 329–360 (TKLLMAEWWYLRPDKPESLTNPTNPLYAWVVH). A helical membrane pass occupies residues 361–378 (LITALLLYGYLIPISLYV). Residues 379 to 943 (SIEVVKVLQA…HGHWCYKRIA (565 aa)) are Cytoplasmic-facing. Aspartate 426 functions as the 4-aspartylphosphate intermediate in the catalytic mechanism. Lysine 625 participates in a covalent cross-link: Glycyl lysine isopeptide (Lys-Gly) (interchain with G-Cter in ubiquitin). Positions 888 and 892 each coordinate Mg(2+). The helical transmembrane segment at 944-963 (QMICYFFYKNITFGLTLFYF) threads the bilayer. Residues 964-977 (ECFTGFSGQSIYND) lie on the Extracellular side of the membrane. A helical transmembrane segment spans residues 978 to 997 (SYLLLFNVVLTSLPVISLGV). The Cytoplasmic segment spans residues 998–1027 (FEQDVPSDVCLQFPALYQQGPKNLFFDWYR). Residues 1028–1050 (ILGWMGNGVYASIVIFTLNLGIF) traverse the membrane as a helical segment. The Extracellular portion of the chain corresponds to 1051–1063 (HVQSFRSDGQTAD). A helical transmembrane segment spans residues 1064 to 1086 (MNAMGTAMFTCIIWAVNVQIALT). At 1087-1092 (MSHFTW) the chain is on the cytoplasmic side. A helical transmembrane segment spans residues 1093 to 1113 (IQHVMIWGSIGAWYVFLALYG). Residues 1114 to 1130 (MLPVKLSGNIFHMLVEI) lie on the Extracellular side of the membrane. A helical membrane pass occupies residues 1131-1155 (LAPAPIFWLTSLLVIAATTLPYLFH). The Cytoplasmic portion of the chain corresponds to 1156 to 1240 (ISYQRSVNPL…SNDTPSSNSQ (85 aa)).

Belongs to the cation transport ATPase (P-type) (TC 3.A.3) family. Type IV subfamily.

It localises to the cell membrane. The protein resides in the endomembrane system. It carries out the reaction ATP + H2O + phospholipidSide 1 = ADP + phosphate + phospholipidSide 2.. Its function is as follows. Involved in transport of phospholipids and in regulation of pollen plasma membrane lipid asymmetry. In Arabidopsis thaliana (Mouse-ear cress), this protein is Phospholipid-transporting ATPase 6.